A 54-amino-acid polypeptide reads, in one-letter code: UPF0391 membrane protein Pnap_0920 (54 aa).

2 consecutive transmembrane segments (helical) span residues 6–26 and 30–50; these read VVFL…IAAG and IAKI…VVSL.

The protein belongs to the UPF0391 family.

Its subcellular location is the cell membrane. This is UPF0391 membrane protein Pnap_0920 from Polaromonas naphthalenivorans (strain CJ2).